Here is a 98-residue protein sequence, read N- to C-terminus: PqqA binding protein (98 aa).

Belongs to the PqqD family. Monomer. Interacts with PqqE.

It functions in the pathway cofactor biosynthesis; pyrroloquinoline quinone biosynthesis. In terms of biological role, functions as a PqqA binding protein and presents PqqA to PqqE, in the pyrroloquinoline quinone (PQQ) biosynthetic pathway. This is PqqA binding protein from Pseudomonas syringae pv. tomato (strain ATCC BAA-871 / DC3000).